The chain runs to 177 residues: Ribulose bisphosphate carboxylase small subunit, chloroplastic 3 (177 aa).

Residues 1–56 constitute a chloroplast transit peptide; it reads MASSMMASTAAAVARAGPAQSSMVPFNACRSSVPFPATRKANNNLSTLPGNGGRVS.

This sequence belongs to the RuBisCO small chain family. Heterohexadecamer of 8 large and 8 small subunits.

Its subcellular location is the plastid. It is found in the chloroplast. Its function is as follows. RuBisCO catalyzes two reactions: the carboxylation of D-ribulose 1,5-bisphosphate, the primary event in carbon dioxide fixation, as well as the oxidative fragmentation of the pentose substrate. Both reactions occur simultaneously and in competition at the same active site. Although the small subunit is not catalytic it is essential for maximal activity. The sequence is that of Ribulose bisphosphate carboxylase small subunit, chloroplastic 3 from Lemna gibba (Swollen duckweed).